Here is a 581-residue protein sequence, read N- to C-terminus: MYSLPGATMSAAPASIISSSSFVEPLLLAAASPAAAAAAANSHHQVRQRGHLVRTLAASSSSNTLLRSDFDLQEGLTTDVKRMLRQRQKKSGGGREMLVTIDNLKRLCIDHYFEEEIEGAMATGACTRLLHSDDLFDATLAFRLLREAGHDVSAKDDVLRRFIDGASGDFKLSLSNDVRGLLSLHDMSHLDVGGEAALLHRAKEFSSRHLASAVRYLDDPSLAEYVRQSLDHPYHLSLTQYKARHHLRYLQSLPSRDAAVERLAVAEFQLNKSLHQGEMREIKRWWMDLGLAEEIPVVRDQVMKWYMWSMAALQGSSFSRYRVEITKIISLVYVVDDIFDLVGTLEELSAFTEAVKMWDTVAADSLPSCMRSCYKALHTVTNEIAEIAQKEHGSNHVNRLRKAWAVLFDGFMVEARWLATDQVPTAEDYLRNGVITSGVPLTFMHIFSMLGYDDPSTEEEEEAIIDHMPSIISCPAKILRLWDDMGSAEDEAQEGFDGSYRDFYLMENPSRSPGEAEAHMRGLIAREWEVLNRECFCRRTFPSNLVQVCLNTARMVSVMYSYNKEQRLPVLEDYAAMMLVL.

The transit peptide at 1 to 34 (MYSLPGATMSAAPASIISSSSFVEPLLLAAASPA) directs the protein to the chloroplast. Residues R299, D336, D340, and R480 each coordinate substrate. D336 and D340 together coordinate Mg(2+). The short motif at 336 to 340 (DDIFD) is the DDXXD motif element. The Mg(2+) site is built by D483, S487, and E491.

It belongs to the terpene synthase family. Monomer. Requires Mg(2+) as cofactor.

The protein resides in the plastid. The protein localises to the chloroplast. The enzyme catalyses (2E,6E)-farnesyl diphosphate + H2O = (3S,6E)-nerolidol + diphosphate. The catalysed reaction is (2E,6E,10E)-geranylgeranyl diphosphate + H2O = (6E,10E)-geranyllinalool + diphosphate. It catalyses the reaction (2E)-geranyl diphosphate + H2O = (S)-linalool + diphosphate. It participates in secondary metabolite biosynthesis; terpenoid biosynthesis. In terms of biological role, involved in sesquiterpene (C15), diterpene (C20) and monoterpene (C10) biosynthesis. Has sesquiterpene synthase activity, converting farnesyl diphosphate to nerolidol, the precursor of the volatile C11-homoterpene (E)-3,8-dimethyl-1,4,7-nonatriene (DMNT). Has diterpene synthase activity, converting geranylgeranyl diphosphate to (E,E)-geranyllinalool, the precursor of the volatile C16-homoterpene (E,E)-4,8,12-trimethyltrideca 1,3,7,11-tetraene (TMTT). Has monoterpene synthase activity, converting geranyl diphosphate into linalool. Forms only the S-isomers of the three tertiary terpene alcohols. The polypeptide is Terpene synthase 2, chloroplastic (Zea mays (Maize)).